The sequence spans 190 residues: Class III hydrophobin F (190 aa).

The N-terminal stretch at 1–18 is a signal peptide; it reads MRPITILCTLATLSTTLA. 4 disulfides stabilise this stretch: cysteine 54–cysteine 115, cysteine 62–cysteine 109, cysteine 63–cysteine 97, and cysteine 116–cysteine 131.

The protein belongs to the fungal hydrophobin family. In terms of assembly, self-assembles to form functional amyloid fibrils called rodlets. Self-assembly into fibrillar rodlets occurs spontaneously at hydrophobic:hydrophilic interfaces and the rodlets further associate laterally to form amphipathic monolayers.

The protein resides in the secreted. It localises to the cell wall. Its function is as follows. Aerial growth, conidiation, and dispersal of filamentous fungi in the environment rely upon a capability of their secreting small amphipathic proteins called hydrophobins (HPBs) with low sequence identity. Class I can self-assemble into an outermost layer of rodlet bundles on aerial cell surfaces, conferring cellular hydrophobicity that supports fungal growth, development and dispersal; whereas Class II form highly ordered films at water-air interfaces through intermolecular interactions but contribute nothing to the rodlet structure. RodF and rodG belong to Class III, which contains hydrophobins with intermediate (between classes I and II) or atypical characteristics. RodF, unlike rodA, is not required for rodlet formation. This Aspergillus fumigatus (strain ATCC MYA-4609 / CBS 101355 / FGSC A1100 / Af293) (Neosartorya fumigata) protein is Class III hydrophobin F.